The following is a 418-amino-acid chain: Tyrosine--tRNA ligase (418 aa).

An L-tyrosine-binding site is contributed by Tyr38. The short motif at 43 to 52 is the 'HIGH' region element; sequence CTAKSLHVGS. L-tyrosine-binding residues include Tyr175 and Gln179. The 'KMSKS' region motif lies at 235-239; sequence KMGKT. Residue Lys238 participates in ATP binding. One can recognise an S4 RNA-binding domain in the interval 348–413; the sequence is LPIIKLLQMC…CGKKRHLKVM (66 aa).

The protein belongs to the class-I aminoacyl-tRNA synthetase family. TyrS type 1 subfamily. As to quaternary structure, homodimer.

It is found in the cytoplasm. The catalysed reaction is tRNA(Tyr) + L-tyrosine + ATP = L-tyrosyl-tRNA(Tyr) + AMP + diphosphate + H(+). Its function is as follows. Catalyzes the attachment of tyrosine to tRNA(Tyr) in a two-step reaction: tyrosine is first activated by ATP to form Tyr-AMP and then transferred to the acceptor end of tRNA(Tyr). The chain is Tyrosine--tRNA ligase from Ehrlichia chaffeensis (strain ATCC CRL-10679 / Arkansas).